The primary structure comprises 195 residues: CASP-like protein 1B1 (195 aa).

The Cytoplasmic portion of the chain corresponds to methionine 1–lysine 15. A helical transmembrane segment spans residues isoleucine 16 to glycine 36. Topologically, residues leucine 37–alanine 67 are extracellular. A helical membrane pass occupies residues phenylalanine 68 to leucine 88. Residues glutamine 89–serine 104 are Cytoplasmic-facing. A helical transmembrane segment spans residues valine 105 to phenylalanine 125. The Extracellular portion of the chain corresponds to methionine 126–alanine 154. A helical transmembrane segment spans residues glycine 155–isoleucine 175. Over serine 176–proline 195 the chain is Cytoplasmic.

It belongs to the Casparian strip membrane proteins (CASP) family. In terms of assembly, homodimer and heterodimers.

Its subcellular location is the cell membrane. The protein is CASP-like protein 1B1 of Arabidopsis lyrata subsp. lyrata (Lyre-leaved rock-cress).